The sequence spans 257 residues: Thioredoxin-dependent peroxide reductase, mitochondrial (257 aa).

The N-terminal 62 residues, 1–62 (MAAAAGRLLW…FAFSTSSSFH (62 aa)), are a transit peptide targeting the mitochondrion. Residues 64 to 222 (PAVTQHAPHF…PLRLVKAFQF (159 aa)) form the Thioredoxin domain. K84 bears the N6-succinyllysine mark. K92 is subject to N6-acetyllysine; alternate. At K92 the chain carries N6-succinyllysine; alternate. C109 functions as the Cysteine sulfenic acid (-SOH) intermediate in the catalytic mechanism. T147 carries the post-translational modification Phosphothreonine.

The protein belongs to the peroxiredoxin family. AhpC/Prx1 subfamily. In terms of assembly, homodimer; disulfide-linked, upon oxidation. 6 homodimers assemble to form a ring-like dodecamer. Interacts with NEK6. Interacts with LRRK2. Interacts with MAP3K13. Interacts with RPS6KC1 (via PX domain). Phosphorylated by LRRK2; phosphorylation reduces perodixase activity. In terms of processing, the enzyme can be inactivated by further oxidation of the cysteine sulfenic acid (C(P)-SOH) to sulphinic acid (C(P)-SO2H) and sulphonic acid (C(P)-SO3H) instead of its condensation to a disulfide bond. Post-translationally, S-palmitoylated. In terms of tissue distribution, ubiquitous.

Its subcellular location is the mitochondrion. The protein resides in the cytoplasm. It is found in the early endosome. It carries out the reaction a hydroperoxide + [thioredoxin]-dithiol = an alcohol + [thioredoxin]-disulfide + H2O. Its function is as follows. Thiol-specific peroxidase that catalyzes the reduction of hydrogen peroxide and organic hydroperoxides to water and alcohols, respectively. Plays a role in cell protection against oxidative stress by detoxifying peroxides. Acts synergistically with MAP3K13 to regulate the activation of NF-kappa-B in the cytosol. Required for the maintenance of physical strength. This Rattus norvegicus (Rat) protein is Thioredoxin-dependent peroxide reductase, mitochondrial (Prdx3).